The following is a 185-amino-acid chain: Casparian strip membrane protein 2 (185 aa).

At 1-25 (MKAVSIEAGEGSKAKRVHGVNRGIS) the chain is on the cytoplasmic side. The chain crosses the membrane as a helical span at residues 26–46 (VFDLVLRIVALVGTLASAVAM). Residues 47–73 (GTADQALSFSTQIVNFEAQYDDIDAFK) are Extracellular-facing. The helical transmembrane segment at 74–94 (FFVVSNSITCVYLALSIPISI) threads the bilayer. Over 95 to 106 (FHIIRSRAGKSR) the chain is Cytoplasmic. Residues 107–127 (VLLIVLDAIMLVFLTSGASAA) traverse the membrane as a helical segment. Over 128 to 160 (AAIVYLAHNGNTSTNWFSICQQYTDFCQRSAGS) the chain is Extracellular. A glycan (N-linked (GlcNAc...) asparagine) is linked at Asn-138. The chain crosses the membrane as a helical span at residues 161–181 (LIGSFGAMALMVLLIILSSIA). At 182–185 (LSRR) the chain is on the cytoplasmic side.

This sequence belongs to the Casparian strip membrane proteins (CASP) family. As to quaternary structure, homodimer and heterodimers.

Its subcellular location is the cell membrane. Its function is as follows. Regulates membrane-cell wall junctions and localized cell wall deposition. Required for establishment of the Casparian strip membrane domain (CSD) and the subsequent formation of Casparian strips, a cell wall modification of the root endodermis that determines an apoplastic barrier between the intraorganismal apoplasm and the extraorganismal apoplasm and prevents lateral diffusion. The polypeptide is Casparian strip membrane protein 2 (Solanum demissum (Wild potato)).